The chain runs to 637 residues: Biosynthetic arginine decarboxylase (637 aa).

Position 101 is an N6-(pyridoxal phosphate)lysine (Lys101). 286 to 296 (FDVGGGLAVDY) contributes to the substrate binding site.

Belongs to the Orn/Lys/Arg decarboxylase class-II family. SpeA subfamily. Mg(2+) is required as a cofactor. The cofactor is pyridoxal 5'-phosphate.

It catalyses the reaction L-arginine + H(+) = agmatine + CO2. It functions in the pathway amine and polyamine biosynthesis; agmatine biosynthesis; agmatine from L-arginine: step 1/1. In terms of biological role, catalyzes the biosynthesis of agmatine from arginine. The protein is Biosynthetic arginine decarboxylase of Shewanella sediminis (strain HAW-EB3).